We begin with the raw amino-acid sequence, 339 residues long: MIAKINQLLEEVGALKAANAEELEVLRIKYLSKKGAINDLMADFRNVAAEQKKEVGMKLNELKTKAQEKINALKEQFDNQDNGQDDLDLTRSAYPVELGTRHPLSIVRNEIIDIFARLGFNIAEGPEIEDDWHVFSALNFAEDHPARDMQDTFFIESHPDVLLRTHTSSVQSRVMEVSQPPIRIICPGRVYRNEAISYRAHCFFHQVEALYVDRNVSFTDLKQVLLLFAKEMFGADTKIRLRPSYFPFTEPSAEMDISCNICGGKGCPFCKHTGWVEILGCGMVDPNVLDANGIDSKVYSGYALGMGIERITNLKYQVKDLRMFSENDTRFLKEFEAAY.

Residue E250 coordinates Mg(2+).

Belongs to the class-II aminoacyl-tRNA synthetase family. Phe-tRNA synthetase alpha subunit type 1 subfamily. Tetramer of two alpha and two beta subunits. Requires Mg(2+) as cofactor.

The protein localises to the cytoplasm. It catalyses the reaction tRNA(Phe) + L-phenylalanine + ATP = L-phenylalanyl-tRNA(Phe) + AMP + diphosphate + H(+). This chain is Phenylalanine--tRNA ligase alpha subunit, found in Bacteroides fragilis (strain ATCC 25285 / DSM 2151 / CCUG 4856 / JCM 11019 / LMG 10263 / NCTC 9343 / Onslow / VPI 2553 / EN-2).